We begin with the raw amino-acid sequence, 396 residues long: MSKEKFARTKPHCNVGTIGHVDHGKTSLTAAITKVLAEAGGATFQAYDQIDKAPEERARGITISTAHVEYETEARHYAHVDCPGHADYVKNMITGAAQMDGAILVVSAADGPMPQTREHILLARQVGVPALVVFLNKCDMVDDEELLELVELEVRELLTSYDFPGDDIPIVKGSALAALEDSDPKLGHDAILELMKAVDDYIPQPERPKDKPFLMPIEDVFSISGRGTVVTGRVERGIVKVGEEIEIIGIRDTQKTTCTGVEMFRKLLDQGEAGDNIGALLRGTKRDDVERGQVLAKPGSITPHTKFKCEAYILTKEEGGRHTPFFSNYRPQFYFRTTDVTGTIELPEGTEMVMPGDNIGMTVQLIAPIAMDEGLRFAIREGGRTVGAGVVASIVQ.

The tr-type G domain maps to 10 to 206 (KPHCNVGTIG…AVDDYIPQPE (197 aa)). The segment at 19-26 (GHVDHGKT) is G1. 19–26 (GHVDHGKT) contacts GTP. A Mg(2+)-binding site is contributed by threonine 26. The G2 stretch occupies residues 60-64 (GITIS). Residues 81-84 (DCPG) are G3. GTP contacts are provided by residues 81 to 85 (DCPGH) and 136 to 139 (NKCD). Positions 136–139 (NKCD) are G4. Positions 174–176 (SAL) are G5.

The protein belongs to the TRAFAC class translation factor GTPase superfamily. Classic translation factor GTPase family. EF-Tu/EF-1A subfamily. Monomer.

Its subcellular location is the cytoplasm. The catalysed reaction is GTP + H2O = GDP + phosphate + H(+). GTP hydrolase that promotes the GTP-dependent binding of aminoacyl-tRNA to the A-site of ribosomes during protein biosynthesis. This Rhodospirillum rubrum (strain ATCC 11170 / ATH 1.1.1 / DSM 467 / LMG 4362 / NCIMB 8255 / S1) protein is Elongation factor Tu 1.